Reading from the N-terminus, the 147-residue chain is 3-dehydroquinate dehydratase (147 aa).

Tyr-23 functions as the Proton acceptor in the catalytic mechanism. Substrate contacts are provided by Asn-75, His-81, and Asp-88. His-101 serves as the catalytic Proton donor. Substrate is bound by residues 102–103 (LS) and Arg-112.

It belongs to the type-II 3-dehydroquinase family. In terms of assembly, homododecamer.

The catalysed reaction is 3-dehydroquinate = 3-dehydroshikimate + H2O. It participates in metabolic intermediate biosynthesis; chorismate biosynthesis; chorismate from D-erythrose 4-phosphate and phosphoenolpyruvate: step 3/7. In terms of biological role, catalyzes a trans-dehydration via an enolate intermediate. This is 3-dehydroquinate dehydratase from Hahella chejuensis (strain KCTC 2396).